A 577-amino-acid polypeptide reads, in one-letter code: MSSSAGKDKEPKVSSGTKEREKEAKAVGPVKESKDKDLKSKVKDAKEGKRDPVGAQAGVAFSLDNTIKRANPASGMRKKASNAEVIKELSKCREENSTRLDLAKKSIHMLPVSIKDLTQITELYLYGNKLQSLPAEVGNLVNLVKLALSENSLTSLPDSLDNLKKLCMLDLRHNKLREIPPVVYRLSSLTTLFLRFNRITAVEKDLKMLPKLTMLSIRENKIKHLPAEIGELCNLITLDVAHNQLEHLPKEIGNCTQITNLDLQHNELLDLPDTIGNLSSLSRLGLRYNRLSAVPRSLSKCSELDELNLENNNISTLPEGLLSSLVKVNSLTLARNCFQSYPVGGPSQFSSIYSLNMEHNRINKIPFGIFSRAKVLSKLNMKDNQLTSLPLDFGTWTSMVELNLATNQLTKIPEDVSGLVSIEVLILSNNLLKKLPHGIGNLRKLRELDLEENKLESLPNEIAYLKDLQKLVLTNNQLTTLPRGIGHLTNLTHLGLGENLLTHLPEEIGTLENLEELYLNDNPNLHSLPFELALCSKLSIMSIENCPLSHLPPQIVAGGPSFIIQFLKMQGPYRAMV.

A compositionally biased stretch (basic and acidic residues) spans 1-52; sequence MSSSAGKDKEPKVSSGTKEREKEAKAVGPVKESKDKDLKSKVKDAKEGKRDP. The interval 1–53 is disordered; the sequence is MSSSAGKDKEPKVSSGTKEREKEAKAVGPVKESKDKDLKSKVKDAKEGKRDPV. LRR repeat units follow at residues 96 to 118, 119 to 140, 142 to 164, 165 to 186, 188 to 209, 211 to 232, 234 to 255, 257 to 278, 280 to 302, 303 to 324, 327 to 348, 351 to 372, 375 to 395, 398 to 419, 421 to 443, 444 to 465, 467 to 489, 490 to 511, 513 to 535, and 537 to 558; these read NSTR…KDLT, QITE…VGNL, NLVK…DNLK, KLCM…VYRL, SLTT…LKML, KLTM…IGEL, NLIT…IGNC, QITN…IGNL, SLSR…SKCS, ELDE…LLSS, KVNS…GPSQ, SIYS…IFSR, VLSK…DFGT, SMVE…VSGL, SIEV…GNLR, KLRE…IAYL, DLQK…GHLT, NLTH…IGTL, NLEE…LALC, and KLSI…IVAG.

Belongs to the SHOC2 family.

The protein resides in the cytoplasm. It localises to the nucleus. In terms of biological role, core component of the SHOC2-MRAS-PP1c (SMP) holophosphatase complex that regulates activation of the MAPK pathway. Acts as a scaffolding protein in the SMP complex. The SMP complex specifically dephosphorylates the inhibitory phosphorylation Raf kinases, stimulating their kinase activities. The SMP complex enhances the dephosphorylation activity and substrate specificity of PP1c. This chain is Leucine-rich repeat protein SHOC-2 (shoc2), found in Xenopus laevis (African clawed frog).